The following is a 138-amino-acid chain: Basic phospholipase A2 homolog MjTX-I (138 aa).

The signal sequence occupies residues 1–16; it reads MRTLWIMAVLLVGVEG. Val34 is a suramin binding site. Disulfide bonds link Cys42–Cys132, Cys44–Cys60, Cys59–Cys111, Cys65–Cys138, Cys66–Cys104, Cys73–Cys97, and Cys91–Cys102. Position 43 (Asn43) interacts with varespladib. Positions 45 and 48 each coordinate suramin. The varespladib site is built by His63 and Lys64. Lys85 provides a ligand contact to suramin.

This sequence belongs to the phospholipase A2 family. Group II subfamily. K49 sub-subfamily. Monomer in solution. Homodimer; non-covalently linked (probable conventional/extended dimer conformation). Homotetramer (dimer of homodimer (probable conventional/extended dimer conformation)); non-covalently linked. Homooligomer. As to expression, expressed by the venom gland.

The protein resides in the secreted. Myotoxin activity is inhibited by suramin and varespladib. Inhibition by suramin may be caused by (i) distortion of MDiS from both monomers impairing the membrane disruption mechanism by the toxin and (ii) surface electrostatic changes of the complex that interfere with the toxin membrane dockage process (putative-MDoS is partially hidden). Inhibition by varespladib is probably through varespladib binding to MDoS. In terms of biological role, snake venom phospholipase A2 homolog that lacks enzymatic activity. In vivo, it displays local myotoxin and edema-inducing activities and is lethal by intraperitoneal injection. The myotoxicity effect is weaker in comparison to other myotoxins, probably due to the formation of high molecular weight complexes and to the oligomeric conformation (conventional dimer). It shows specificity toward neurons and myotubes, but not on a variety of other cell types. This PLA2 excites a cohort of sensory neurons via ATP release and consequent activation of P2RX2 and/or P2RX3 purinergic receptors. Pannexin hemichannels act as downstream mediators of toxin-evoked ATP release. In vivo, it elicits nonneurogenic inflammatory pain, thermal hyperalgesia, and mechanical allodynia, of which the latter is completely dependent on purinergic signaling. The sequence is that of Basic phospholipase A2 homolog MjTX-I from Bothrops moojeni (Lance-headed viper).